The sequence spans 104 residues: NADH-quinone oxidoreductase subunit K (104 aa).

Transmembrane regions (helical) follow at residues 4 to 24, 31 to 51, and 67 to 87; these read VPAS…LFGA, VIVL…LVAF, and LFTM…LIAL.

The protein belongs to the complex I subunit 4L family. As to quaternary structure, NDH-1 is composed of 14 different subunits. Subunits NuoA, H, J, K, L, M, N constitute the membrane sector of the complex.

The protein resides in the cell membrane. It catalyses the reaction a quinone + NADH + 5 H(+)(in) = a quinol + NAD(+) + 4 H(+)(out). In terms of biological role, NDH-1 shuttles electrons from NADH, via FMN and iron-sulfur (Fe-S) centers, to quinones in the respiratory chain. The immediate electron acceptor for the enzyme in this species is believed to be a menaquinone. Couples the redox reaction to proton translocation (for every two electrons transferred, four hydrogen ions are translocated across the cytoplasmic membrane), and thus conserves the redox energy in a proton gradient. This Bacillus cereus (strain AH820) protein is NADH-quinone oxidoreductase subunit K.